A 385-amino-acid polypeptide reads, in one-letter code: Glucans biosynthesis protein C (385 aa).

The next 10 helical transmembrane spans lie at 17-39 (AWLMLLGIPFHISLIYSSHTWHV), 54-76 (FIHSFRMQVFFVISGYFSYMLFL), 88-110 (VERVGIPMLTAIPLLTLPQFIML), 136-158 (LISHLWFLLVLVVMTTLCVWIFK), 179-198 (LSVIFLCLGIGYAVIRRTIF), 213-235 (IVMQTLFYLPFFILGALAFIFPH), 242-261 (TPSRGCTLAAALAFVAYLLN), 276-295 (SVITMVLGLWMVNVVFSFGH), 308-330 (FVNASLFIYLVHHPLTLFFGAYI), and 334-356 (ITSNWLGFLCGLIFVVGIAIILY).

This sequence belongs to the acyltransferase 3 family. OpgC subfamily.

It localises to the cell membrane. It functions in the pathway glycan metabolism; osmoregulated periplasmic glucan (OPG) biosynthesis. Its function is as follows. Necessary for the succinyl substitution of periplasmic glucans. Could catalyze the transfer of succinyl residues from the cytoplasmic side of the membrane to the nascent glucan backbones on the periplasmic side of the membrane. This Escherichia coli O157:H7 protein is Glucans biosynthesis protein C.